The following is a 479-amino-acid chain: MNFETIIGLEVHVELNTNSKIFSPSSAHFGEDPNANTNVIDWSFPGVLPVLNKGVVDAGIKAALALNMDIHKDMHFDRKNYFYPDNPKAYQISQFDEPIGYNGWIEIELEDGSTKKIRIERAHLEEDAGKNTHGTDGYSYVDLNRQGVPLIEIVSEADMRSPEEAYAYLTALKEIIQYTGISDVKMEEGSMRVDANISLRPYGQEKFGTKTELKNLNSFNYVRKGLQHEVERQAKILRSGGQIQQETRRYDESTGETILMRVKEGSADYRYFPEPDLPLYEIDDSWIEEVRAELPVFPKARRAHYVENLGLTAYDAGQLTSTKALSDFFEAAVAAGGDAKQVSNWLQGEVAQFLNAEGKTIEQIALTPENLVEMIALIADGTISSKIAKKVFVHLAKEGGSAKAYVEKAGLVQISDPAVLIPIIHQVFADNEAAVADFKSGKRNADKAFTGFLMKATKGQANPQVAQQLLAQELAKLLD.

Belongs to the GatB/GatE family. GatB subfamily. Heterotrimer of A, B and C subunits.

The catalysed reaction is L-glutamyl-tRNA(Gln) + L-glutamine + ATP + H2O = L-glutaminyl-tRNA(Gln) + L-glutamate + ADP + phosphate + H(+). The enzyme catalyses L-aspartyl-tRNA(Asn) + L-glutamine + ATP + H2O = L-asparaginyl-tRNA(Asn) + L-glutamate + ADP + phosphate + 2 H(+). Functionally, allows the formation of correctly charged Asn-tRNA(Asn) or Gln-tRNA(Gln) through the transamidation of misacylated Asp-tRNA(Asn) or Glu-tRNA(Gln) in organisms which lack either or both of asparaginyl-tRNA or glutaminyl-tRNA synthetases. The reaction takes place in the presence of glutamine and ATP through an activated phospho-Asp-tRNA(Asn) or phospho-Glu-tRNA(Gln). The chain is Aspartyl/glutamyl-tRNA(Asn/Gln) amidotransferase subunit B from Streptococcus suis (strain 98HAH33).